A 144-amino-acid polypeptide reads, in one-letter code: Large ribosomal subunit protein uL15 (144 aa).

The disordered stretch occupies residues 1–52 (MIKLESLQDPSPRKRRKKLLGRGPGSGHGKTSGRGHKGDGSRSGYKRRFGYE). A compositionally biased stretch (gly residues) spans 22-32 (RGPGSGHGKTS).

It belongs to the universal ribosomal protein uL15 family. As to quaternary structure, part of the 50S ribosomal subunit.

In terms of biological role, binds to the 23S rRNA. In Chlamydia felis (strain Fe/C-56) (Chlamydophila felis), this protein is Large ribosomal subunit protein uL15.